Reading from the N-terminus, the 1009-residue chain is Rho-type GTPase-activating protein 2 (1009 aa).

LIM zinc-binding domains follow at residues 11 to 68 and 69 to 129; these read SLCV…DCSD and KCTN…LLRK. The segment covering 143 to 155 has biased composition (basic and acidic residues); the sequence is KEDFPIKLPERSV. 5 disordered regions span residues 143 to 228, 358 to 433, 449 to 608, 664 to 709, and 723 to 780; these read KEDF…RTVS, TKEN…LSRS, TSEM…DATD, TREK…ASPK, and QVGD…DYTP. Positions 162–196 are enriched in polar residues; that stretch reads TRINGKSDVSTNNTAISKNLVSSNEDQQLTPQVLV. Residues 212-222 are compositionally biased toward basic and acidic residues; it reads DNSKDREETSS. Composition is skewed to polar residues over residues 363 to 385 and 399 to 414; these read KSSQ…ITRT and LRLS…QTAD. Basic residues predominate over residues 481–491; that stretch reads NIRKSKAKKNP. 2 stretches are compositionally biased toward polar residues: residues 493–510 and 522–553; these read SRGQ…QHGN and QSSL…SSSG. Residues 664 to 682 are compositionally biased toward basic and acidic residues; that stretch reads TREKDKQSASSRESLEQKE. Composition is skewed to polar residues over residues 683–707 and 728–749; these read NIAT…SNAS and ESQQ…QKEI. The residue at position 763 (Ser763) is a Phosphoserine. One can recognise a Rho-GAP domain in the interval 788-1006; it reads SSLQARCAYE…FILGNYRDIF (219 aa).

GTPase-activating protein (GAP) for CDC42 and/or RHO1. The chain is Rho-type GTPase-activating protein 2 (RGA2) from Saccharomyces cerevisiae (strain ATCC 204508 / S288c) (Baker's yeast).